We begin with the raw amino-acid sequence, 223 residues long: MKMADGSTILRRNRPGTKSKDFCRWPDEPLEEMDSTLAVQQYIQQLIKRDPSNVELILTMPEAQDEGVWKYEHLRQFCMELNGLAVRLQKECSPSTCTQMTATDQWIFLCAAHKTPKECPAIDYTRHTLDGAACLLNSNKYFPSRVSIKESSVTKLGSVCRRVYRIFSHAYFHHRRIFDEFEAETYLCHRFTHFVTKYNLMSKENLIVPINVGENAAPGESEA.

Residues 1–21 (MKMADGSTILRRNRPGTKSKD) form a disordered region. Residues Cys92, Cys97, His169, and His174 each contribute to the Zn(2+) site.

The protein belongs to the MOB1/phocein family.

The protein is MOB kinase activator-like 4 (Mob4) of Drosophila melanogaster (Fruit fly).